A 146-amino-acid polypeptide reads, in one-letter code: DNA-directed RNA polymerase subunit beta (146 aa).

It belongs to the RNA polymerase beta chain family. As to quaternary structure, the RNAP catalytic core consists of 2 alpha, 1 beta, 1 beta' and 1 omega subunit. When a sigma factor is associated with the core the holoenzyme is formed, which can initiate transcription.

The catalysed reaction is RNA(n) + a ribonucleoside 5'-triphosphate = RNA(n+1) + diphosphate. Functionally, DNA-dependent RNA polymerase catalyzes the transcription of DNA into RNA using the four ribonucleoside triphosphates as substrates. The chain is DNA-directed RNA polymerase subunit beta (rpoB) from Liberibacter africanus (Citrus greening disease).